The sequence spans 64 residues: Large ribosomal subunit protein uL29 (64 aa).

Belongs to the universal ribosomal protein uL29 family.

This chain is Large ribosomal subunit protein uL29, found in Lacticaseibacillus paracasei (strain ATCC 334 / BCRC 17002 / CCUG 31169 / CIP 107868 / KCTC 3260 / NRRL B-441) (Lactobacillus paracasei).